We begin with the raw amino-acid sequence, 204 residues long: Adenylyl-sulfate kinase (204 aa).

34–41 lines the ATP pocket; the sequence is GLSGSGKS. Ser-108 serves as the catalytic Phosphoserine intermediate.

This sequence belongs to the APS kinase family.

The catalysed reaction is adenosine 5'-phosphosulfate + ATP = 3'-phosphoadenylyl sulfate + ADP + H(+). The protein operates within sulfur metabolism; hydrogen sulfide biosynthesis; sulfite from sulfate: step 2/3. Its function is as follows. Catalyzes the synthesis of activated sulfate. In Phocaeicola vulgatus (strain ATCC 8482 / DSM 1447 / JCM 5826 / CCUG 4940 / NBRC 14291 / NCTC 11154) (Bacteroides vulgatus), this protein is Adenylyl-sulfate kinase.